We begin with the raw amino-acid sequence, 434 residues long: Pyrichalasin H cluster regulator BC2 (434 aa).

Disordered stretches follow at residues 297–321 (GSSP…CSPL) and 362–383 (HPGH…RLSH). The segment covering 298–309 (SSPSGTPESELT) has biased composition (polar residues). Over residues 362–380 (HPGHEDHQQQQEEVKQHDR) the composition is skewed to basic and acidic residues.

Its subcellular location is the nucleus. Transcription factor probably involved in regulation of gene cluster that mediates the biosynthesis of a tyrosine-derived cytochalasan acting as a fungal signal recognized by resistant rice plants and leads to avirulence in Pi33 resistant rice cultivars. This Pyricularia oryzae (strain 70-15 / ATCC MYA-4617 / FGSC 8958) (Rice blast fungus) protein is Pyrichalasin H cluster regulator BC2.